The chain runs to 373 residues: Glutamate 5-kinase (373 aa).

Lys15 lines the ATP pocket. Substrate-binding residues include Ser56, Asp143, and Asn155. Residue 175–176 (SD) participates in ATP binding. The PUA domain occupies 281 to 358 (KGTLTIDAGA…PDVMTILGIS (78 aa)).

This sequence belongs to the glutamate 5-kinase family.

The protein localises to the cytoplasm. It catalyses the reaction L-glutamate + ATP = L-glutamyl 5-phosphate + ADP. It participates in amino-acid biosynthesis; L-proline biosynthesis; L-glutamate 5-semialdehyde from L-glutamate: step 1/2. Catalyzes the transfer of a phosphate group to glutamate to form L-glutamate 5-phosphate. This is Glutamate 5-kinase from Bradyrhizobium diazoefficiens (strain JCM 10833 / BCRC 13528 / IAM 13628 / NBRC 14792 / USDA 110).